The following is a 161-amino-acid chain: Cytochrome c-type biogenesis protein CcmE (161 aa).

The Cytoplasmic portion of the chain corresponds to 1–8; that stretch reads MNARRKKR. The helical; Signal-anchor for type II membrane protein transmembrane segment at 9 to 29 threads the bilayer; sequence LALATALIGGVAAIASLLLYA. The Periplasmic segment spans residues 30-161; the sequence is LNSNLNLFYT…EYDSTQKTGY (132 aa). Heme is bound by residues His131 and Tyr135.

It belongs to the CcmE/CycJ family.

It is found in the cell inner membrane. Heme chaperone required for the biogenesis of c-type cytochromes. Transiently binds heme delivered by CcmC and transfers the heme to apo-cytochromes in a process facilitated by CcmF and CcmH. In Shewanella loihica (strain ATCC BAA-1088 / PV-4), this protein is Cytochrome c-type biogenesis protein CcmE.